We begin with the raw amino-acid sequence, 622 residues long: Microtubule-associated protein 70-1 (622 aa).

A disordered region spans residues 1–27 (MSDVSADGGFLSAEQATTPVAIPTPYP). The stretch at 66-365 (DPVKVELNRL…LAISDRAAKS (300 aa)) forms a coiled coil. The required for targeting to microtubules stretch occupies residues 250–483 (ILDRMHRQKV…YSFNKACDET (234 aa)). Disordered regions lie at residues 388-512 (SSIS…TEDN) and 579-622 (AAMR…RSTQ). Composition is skewed to polar residues over residues 400 to 425 (SMSN…SNGF) and 432 to 453 (MRNS…TSKS). Composition is skewed to basic and acidic residues over residues 479-501 (ACDE…EKPP) and 579-591 (AAMR…DNRA). Residues 541 to 590 (DKDDAIEMLAKKVETLTKAMEVEAKKMRREVAAMEKEVAAMRVDKDQDNR) are a coiled coil. A compositionally biased stretch (polar residues) spans 594–605 (SSNTKPSSNTAQ).

It belongs to the MAP70 family. In terms of assembly, interacts with MAP70.5 and itself.

The protein localises to the cytoplasm. Its subcellular location is the cytoskeleton. It localises to the phragmoplast. It is found in the spindle. In terms of biological role, plant-specific protein that interact with microtubules. In association with MAP70.5, is essential for the normal banding pattern of secondary cell wall and for the proper development of xylem tracheary elements and wood formation. In Arabidopsis thaliana (Mouse-ear cress), this protein is Microtubule-associated protein 70-1 (MAP70.1).